We begin with the raw amino-acid sequence, 960 residues long: Putative helicase L207/L206 (960 aa).

The interval 1–32 is disordered; sequence MTSKTENKKSVSSKTGRTTNNSTNKKTTEKSV. The span at 12-25 shows a compositional bias: low complexity; that stretch reads SSKTGRTTNNSTNK. In terms of domain architecture, SF3 helicase spans 646-807; that stretch reads SMREYILTLL…FIKHSEATKK (162 aa).

The chain is Putative helicase L207/L206 from Acanthamoeba polyphaga mimivirus (APMV).